The primary structure comprises 437 residues: Sorting nexin-30 (437 aa).

Disordered regions lie at residues 1 to 44 and 54 to 73; these read MAGG…PDLL and LILP…SSSS. T38 carries the phosphothreonine modification. The residue at position 40 (S40) is a Phosphoserine. A compositionally biased stretch (low complexity) spans 63 to 73; the sequence is AGTSSPASSSS. One can recognise a PX domain in the interval 89–210; it reads RDLFVIVDDP…IFLTAKDLNA (122 aa). Residues R132, Q134, K162, and R176 each contribute to the a 1,2-diacyl-sn-glycero-3-phospho-(1D-myo-inositol-3-phosphate) site. Residues 234–437 enclose the BAR domain; the sequence is KLRTRPLEFA…PLLQEKQEAK (204 aa).

The protein belongs to the sorting nexin family. As to quaternary structure, heterodimer; heterodimerizes with SNX4.

It localises to the early endosome membrane. Functionally, involved in the regulation of endocytosis and in several stages of intracellular trafficking. Together with SNX4, involved in autophagosome assembly. The chain is Sorting nexin-30 from Homo sapiens (Human).